A 352-amino-acid polypeptide reads, in one-letter code: N-terminal EF-hand calcium-binding protein 1 (352 aa).

S4 is subject to Phosphoserine. EF-hand domains are found at residues K26–S61 and L60–E95. Ca(2+)-binding residues include D39, N41, D43, K45, and E50. The stretch at L135 to Q163 forms a coiled coil. Residues E155 to V202 are disordered. Residues H190–V202 show a composition bias toward polar residues. A phosphoserine mark is found at S192 and S197. A coiled-coil region spans residues E209–Y275. The ABM domain occupies M252–M340.

In terms of assembly, interacts with STX1. May interact with CPNE6. In terms of tissue distribution, expressed in brain (at protein level). Expressed in the cerebral cortex only in layer 4, thalamic nuclei (the mediodorsal nucleus), hippocampus (a small band of pyramidal neurons at the boundary between CA1 and CA3), interneurons interspersed throughout the hippocampus proper, interneurons in the hilus, bodies of the neurons but also their dendritic projections (at protein level).

The protein resides in the cytoplasm. The polypeptide is N-terminal EF-hand calcium-binding protein 1 (Necab1) (Mus musculus (Mouse)).